A 194-amino-acid polypeptide reads, in one-letter code: Yellow fluorescent protein (194 aa).

Lumazine-binding repeat units lie at residues methionine 1 to histidine 98 and isoleucine 99 to tryptophan 194. Position 179 to 183 (lysine 179 to glutamate 183) interacts with FMN.

Homodimer. FMN is required as a cofactor.

Its function is as follows. Antenna protein that modulates the color of the bioluminescence emission of the luciferase. In the presence of YFP and only at temperatures below 20 degrees Celsius, luciferase exhibits a bimodal emission spectrum with a new peak at 545 nM (yellow), in addition to the one at 485 nM. The sequence is that of Yellow fluorescent protein (luxY) from Aliivibrio fischeri (Vibrio fischeri).